Reading from the N-terminus, the 121-residue chain is Large ribosomal subunit protein uL22 (121 aa).

The protein belongs to the universal ribosomal protein uL22 family. Part of the 50S ribosomal subunit.

Its function is as follows. This protein binds specifically to 23S rRNA; its binding is stimulated by other ribosomal proteins, e.g. L4, L17, and L20. It is important during the early stages of 50S assembly. It makes multiple contacts with different domains of the 23S rRNA in the assembled 50S subunit and ribosome. In terms of biological role, the globular domain of the protein is located near the polypeptide exit tunnel on the outside of the subunit, while an extended beta-hairpin is found that lines the wall of the exit tunnel in the center of the 70S ribosome. This Parasynechococcus marenigrum (strain WH8102) protein is Large ribosomal subunit protein uL22.